The following is a 317-amino-acid chain: Universal stress protein Mb2019 (317 aa).

ATP contacts are provided by residues glycine 13, glycine 128–alanine 134, serine 142–valine 143, glycine 175, aspartate 208, glycine 277–glycine 283, and serine 291–serine 293.

Belongs to the universal stress protein A family.

This Mycobacterium bovis (strain ATCC BAA-935 / AF2122/97) protein is Universal stress protein Mb2019.